Reading from the N-terminus, the 398-residue chain is 8-amino-7-oxononanoate synthase (398 aa).

Residues Arg22 and Arg29 each coordinate substrate. Pyridoxal 5'-phosphate is bound at residue 109 to 110; sequence GW. A substrate-binding site is contributed by His141. Residues Ser189, 214–217, and 242–245 contribute to the pyridoxal 5'-phosphate site; these read DEAH and TFSK. Residue Lys245 is modified to N6-(pyridoxal phosphate)lysine. Substrate is bound at residue Thr359.

The protein belongs to the class-II pyridoxal-phosphate-dependent aminotransferase family. BioF subfamily. In terms of assembly, homodimer. Requires pyridoxal 5'-phosphate as cofactor.

It catalyses the reaction 6-carboxyhexanoyl-[ACP] + L-alanine + H(+) = (8S)-8-amino-7-oxononanoate + holo-[ACP] + CO2. It functions in the pathway cofactor biosynthesis; biotin biosynthesis. Functionally, catalyzes the decarboxylative condensation of pimeloyl-[acyl-carrier protein] and L-alanine to produce 8-amino-7-oxononanoate (AON), [acyl-carrier protein], and carbon dioxide. The polypeptide is 8-amino-7-oxononanoate synthase (Gluconacetobacter diazotrophicus (strain ATCC 49037 / DSM 5601 / CCUG 37298 / CIP 103539 / LMG 7603 / PAl5)).